A 462-amino-acid chain; its full sequence is Cysteine--tRNA ligase (462 aa).

Position 30 (C30) interacts with Zn(2+). The 'HIGH' region signature appears at 32-42 (MTVYDYCHVGH). C214, H239, and E243 together coordinate Zn(2+). A 'KMSKS' region motif is present at residues 271–275 (KMSKS). K274 contacts ATP.

The protein belongs to the class-I aminoacyl-tRNA synthetase family. Monomer. Zn(2+) serves as cofactor.

It localises to the cytoplasm. The catalysed reaction is tRNA(Cys) + L-cysteine + ATP = L-cysteinyl-tRNA(Cys) + AMP + diphosphate. The protein is Cysteine--tRNA ligase of Cupriavidus necator (strain ATCC 17699 / DSM 428 / KCTC 22496 / NCIMB 10442 / H16 / Stanier 337) (Ralstonia eutropha).